The chain runs to 112 residues: UPF0342 protein SP_1372 (112 aa).

The protein belongs to the UPF0342 family.

This Streptococcus pneumoniae serotype 4 (strain ATCC BAA-334 / TIGR4) protein is UPF0342 protein SP_1372.